Reading from the N-terminus, the 156-residue chain is Cyclin-dependent protein kinase inhibitor SMR10 (156 aa).

The segment at 52–90 (QDQDLEPKSQETNNCSRKEGATVKKEEEEEDDYCKTPTR) is disordered. Positions 67–77 (SRKEGATVKKE) are enriched in basic and acidic residues.

Probable cyclin-dependent protein kinase (CDK) inhibitor that functions as a repressor of mitosis in the endoreduplication cell cycle. This is Cyclin-dependent protein kinase inhibitor SMR10 from Arabidopsis thaliana (Mouse-ear cress).